A 398-amino-acid chain; its full sequence is MPSEPFGRHNATNTLISITQDDTMTHIKPVIAALALIGLAACSGSKTEQPKLDYQSRSHRLIKLEVPPDLNNPDQGNLYRLPAGSGAVRASDLEKRRTPAVQQPADAEVLKSVKGVRLERDGSQRWLVVDGKSPAEIWPLLKAFWQENGFDIKSEEPAIGQMETEWAENRAKIPQDSLRRLFDKVGLGGIYSTGERDKFIVRIEQGKNGVSDIFFAHKAMKEVYGGKDKDTTVWQPSPSDPNLEAAFLTRFMQYLGVDGQQAENASAKKPTLPAANEMARIEGKSLIVFGDYGRNWRRTVLALDRIGLTVVGQNTERHAFLVQKAPNESNAVTEQKPGLFKRLLGKGKAEKPAEQPELIVYAEPVANGSRIVLLNKDGSAYAGKDASALLGKLHSELR.

This is an uncharacterized protein from Neisseria meningitidis serogroup B (strain ATCC BAA-335 / MC58).